A 103-amino-acid chain; its full sequence is Large ribosomal subunit protein bL21 (103 aa).

Belongs to the bacterial ribosomal protein bL21 family. Part of the 50S ribosomal subunit. Contacts protein L20.

This protein binds to 23S rRNA in the presence of protein L20. The sequence is that of Large ribosomal subunit protein bL21 from Clostridioides difficile (strain 630) (Peptoclostridium difficile).